Consider the following 421-residue polypeptide: MFVHPLNVAISDSQNKYQYVVCKHTISVFAGEKLVGYWVDTDQRDSHNSYKKLKSNAGDAKPKGSQGIGAPAVYSYIRNLRLTSDEGKLIACVDSDKSVVIFKIDTSAEDPEKFLQVMKRQQFPKRPNALALADEDTTIIVADKFGDVYKLKIDEEPIRKIDDQSEPILGHVSMLTDVAVAKDANNKSYIITTDRDEHIKISHYPQTFIVDKWLFGHKEFVSSVDLPKWQTKFLFSAGGDKEIFAWNWQSGELLSQYSFEDAVKPFINDQHLAPARFQNEENNVIEYAVASIKSCGQQPYVAFFVEATPVLFILHCNTETGELSLAQQVEFKHNVVSISSNGKSEYLVTFDNRDENAEQLIAFLTYSGDSNKPFSVDENLNKLNSSWISTFKQKDELLADADSVYPLYNIASLKKHGEHFS.

WD repeat units follow at residues 72-112 (AVYS…EDPE), 170-212 (GHVS…IVDK), and 216-258 (GHKE…SQYS).

This sequence belongs to the WD repeat TRM82 family. In terms of assembly, forms a heterodimer with the catalytic subunit TRM8.

The protein resides in the nucleus. It functions in the pathway tRNA modification; N(7)-methylguanine-tRNA biosynthesis. Its function is as follows. Required for the formation of N(7)-methylguanine at position 46 (m7G46) in tRNA. In the complex, it is required to stabilize and induce conformational changes of the catalytic subunit. In Candida glabrata (strain ATCC 2001 / BCRC 20586 / JCM 3761 / NBRC 0622 / NRRL Y-65 / CBS 138) (Yeast), this protein is tRNA (guanine-N(7)-)-methyltransferase non-catalytic subunit TRM82.